A 921-amino-acid chain; its full sequence is Isoleucine--tRNA ligase (921 aa).

The short motif at proline 57–histidine 67 is the 'HIGH' region element. Glutamate 553 is an L-isoleucyl-5'-AMP binding site. A 'KMSKS' region motif is present at residues lysine 594–serine 598. Residue lysine 597 coordinates ATP.

This sequence belongs to the class-I aminoacyl-tRNA synthetase family. IleS type 1 subfamily. As to quaternary structure, monomer.

It localises to the cytoplasm. The enzyme catalyses tRNA(Ile) + L-isoleucine + ATP = L-isoleucyl-tRNA(Ile) + AMP + diphosphate. Catalyzes the attachment of isoleucine to tRNA(Ile). As IleRS can inadvertently accommodate and process structurally similar amino acids such as valine, to avoid such errors it has two additional distinct tRNA(Ile)-dependent editing activities. One activity is designated as 'pretransfer' editing and involves the hydrolysis of activated Val-AMP. The other activity is designated 'posttransfer' editing and involves deacylation of mischarged Val-tRNA(Ile). The sequence is that of Isoleucine--tRNA ligase from Bacillus subtilis (strain 168).